Reading from the N-terminus, the 471-residue chain is Glutamate--tRNA ligase (471 aa).

Positions 9 to 19 (PSPTGYLHVGG) match the 'HIGH' region motif. Zn(2+) is bound by residues Cys-98, Cys-100, Cys-125, and His-127. The 'KMSKS' region signature appears at 237–241 (KLSKR). Position 240 (Lys-240) interacts with ATP.

This sequence belongs to the class-I aminoacyl-tRNA synthetase family. Glutamate--tRNA ligase type 1 subfamily. In terms of assembly, monomer. Requires Zn(2+) as cofactor.

It is found in the cytoplasm. The catalysed reaction is tRNA(Glu) + L-glutamate + ATP = L-glutamyl-tRNA(Glu) + AMP + diphosphate. Catalyzes the attachment of glutamate to tRNA(Glu) in a two-step reaction: glutamate is first activated by ATP to form Glu-AMP and then transferred to the acceptor end of tRNA(Glu). This Enterobacter sp. (strain 638) protein is Glutamate--tRNA ligase.